We begin with the raw amino-acid sequence, 424 residues long: MKKVIITPSKLKGSVKIPPSKSMAHRAIICASLSKGESVISNIDFSEDIIATMEGMKSLGANIKVEKDKLIINGENILKDSNYKVIDCNESGSTLRFLVPISLIKDNRVNFIGRGNLGKRPLKTYYEIFEEQEVKYSYEEENLDLNIEGSLKGGEFKVKGNISSQFISGLLFTLPLLKEDSKIIITTELESKGYIDLTLDMIEKFGVTIKNNNYREFLIKGNQSYKPMNYKVEGDYSQAAFYFSAGALGSEINCLDLDLSSYQGDKECIEILEGMGARLIENQEESLSIIHGDLNGTIIDASQCPDIIPVLTVVAALSKGETRIINGERLRIKECDRLNAICTELNKLGADIKELKDGLIIKGVKELIGGEVYSHKDHRIAMSLAIASTRCKEEVIIKEPDCVKKSYPGFWEDFKSLGGILKGE.

3-phosphoshikimate is bound by residues Lys21, Ser22, and Arg26. A phosphoenolpyruvate-binding site is contributed by Lys21. Residues Gly92 and Arg120 each coordinate phosphoenolpyruvate. 3-phosphoshikimate contacts are provided by Ser163, Ser164, Gln165, Ser191, Asp306, and Lys333. Residue Gln165 coordinates phosphoenolpyruvate. Catalysis depends on Asp306, which acts as the Proton acceptor. Residues Arg337, Arg379, and Lys405 each contribute to the phosphoenolpyruvate site.

The protein belongs to the EPSP synthase family. In terms of assembly, monomer.

It is found in the cytoplasm. It carries out the reaction 3-phosphoshikimate + phosphoenolpyruvate = 5-O-(1-carboxyvinyl)-3-phosphoshikimate + phosphate. It functions in the pathway metabolic intermediate biosynthesis; chorismate biosynthesis; chorismate from D-erythrose 4-phosphate and phosphoenolpyruvate: step 6/7. In terms of biological role, catalyzes the transfer of the enolpyruvyl moiety of phosphoenolpyruvate (PEP) to the 5-hydroxyl of shikimate-3-phosphate (S3P) to produce enolpyruvyl shikimate-3-phosphate and inorganic phosphate. The sequence is that of 3-phosphoshikimate 1-carboxyvinyltransferase from Clostridium perfringens (strain ATCC 13124 / DSM 756 / JCM 1290 / NCIMB 6125 / NCTC 8237 / Type A).